Here is a 984-residue protein sequence, read N- to C-terminus: Probable beta-galactosidase C (984 aa).

The signal sequence occupies residues methionine 1–alanine 23. Tyrosine 82, asparagine 127, alanine 128, glutamate 129, and asparagine 187 together coordinate substrate. The Proton donor role is filled by glutamate 188. N-linked (GlcNAc...) asparagine glycosylation is present at asparagine 197. Tyrosine 251 is a substrate binding site. Cysteine 257 and cysteine 304 are disulfide-bonded. N-linked (GlcNAc...) asparagine glycosylation is present at asparagine 276. Glutamate 287 serves as the catalytic Nucleophile. Tyrosine 353 provides a ligand contact to substrate. Asparagine 391, asparagine 421, asparagine 434, asparagine 517, asparagine 602, asparagine 677, asparagine 715, asparagine 720, asparagine 759, and asparagine 805 each carry an N-linked (GlcNAc...) asparagine glycan.

The protein belongs to the glycosyl hydrolase 35 family.

Its subcellular location is the secreted. It carries out the reaction Hydrolysis of terminal non-reducing beta-D-galactose residues in beta-D-galactosides.. In terms of biological role, cleaves beta-linked terminal galactosyl residues from gangliosides, glycoproteins, and glycosaminoglycans. The sequence is that of Probable beta-galactosidase C (lacC) from Aspergillus flavus (strain ATCC 200026 / FGSC A1120 / IAM 13836 / NRRL 3357 / JCM 12722 / SRRC 167).